The primary structure comprises 342 residues: Ribosomal RNA small subunit methyltransferase C (342 aa).

Belongs to the methyltransferase superfamily. RsmC family. In terms of assembly, monomer.

It localises to the cytoplasm. The catalysed reaction is guanosine(1207) in 16S rRNA + S-adenosyl-L-methionine = N(2)-methylguanosine(1207) in 16S rRNA + S-adenosyl-L-homocysteine + H(+). Its function is as follows. Specifically methylates the guanine in position 1207 of 16S rRNA in the 30S particle. The sequence is that of Ribosomal RNA small subunit methyltransferase C from Shewanella piezotolerans (strain WP3 / JCM 13877).